The primary structure comprises 164 residues: OV-17 antigen (164 aa).

Positions 1-16 (MKFVILLTIGLLVVAA) are cleaved as a signal peptide. The interval 24–43 (QQQQQQQQQRDEREIPPFLE) is disordered.

The protein belongs to the SXP/RAL-2 family. High levels in the hypodermal layer of the adult female.

The sequence is that of OV-17 antigen (OV17) from Onchocerca volvulus.